The following is a 101-amino-acid chain: Aspartyl/glutamyl-tRNA(Asn/Gln) amidotransferase subunit C (101 aa).

It belongs to the GatC family. Heterotrimer of A, B and C subunits.

It catalyses the reaction L-glutamyl-tRNA(Gln) + L-glutamine + ATP + H2O = L-glutaminyl-tRNA(Gln) + L-glutamate + ADP + phosphate + H(+). The enzyme catalyses L-aspartyl-tRNA(Asn) + L-glutamine + ATP + H2O = L-asparaginyl-tRNA(Asn) + L-glutamate + ADP + phosphate + 2 H(+). In terms of biological role, allows the formation of correctly charged Asn-tRNA(Asn) or Gln-tRNA(Gln) through the transamidation of misacylated Asp-tRNA(Asn) or Glu-tRNA(Gln) in organisms which lack either or both of asparaginyl-tRNA or glutaminyl-tRNA synthetases. The reaction takes place in the presence of glutamine and ATP through an activated phospho-Asp-tRNA(Asn) or phospho-Glu-tRNA(Gln). The sequence is that of Aspartyl/glutamyl-tRNA(Asn/Gln) amidotransferase subunit C from Enterococcus faecalis (strain ATCC 700802 / V583).